Reading from the N-terminus, the 635-residue chain is Biosynthetic arginine decarboxylase (635 aa).

Lys-100 bears the N6-(pyridoxal phosphate)lysine mark. 282–292 (LDIGGGLGVDY) serves as a coordination point for substrate.

This sequence belongs to the Orn/Lys/Arg decarboxylase class-II family. SpeA subfamily. Requires Mg(2+) as cofactor. It depends on pyridoxal 5'-phosphate as a cofactor.

The catalysed reaction is L-arginine + H(+) = agmatine + CO2. Its pathway is amine and polyamine biosynthesis; agmatine biosynthesis; agmatine from L-arginine: step 1/1. Catalyzes the biosynthesis of agmatine from arginine. This is Biosynthetic arginine decarboxylase (speA) from Citrifermentans bemidjiense (strain ATCC BAA-1014 / DSM 16622 / JCM 12645 / Bem) (Geobacter bemidjiensis).